We begin with the raw amino-acid sequence, 324 residues long: tRNA dimethylallyltransferase (324 aa).

17-24 (GPTASGKT) provides a ligand contact to ATP. Position 19-24 (19-24 (TASGKT)) interacts with substrate. 3 interaction with substrate tRNA regions span residues 42 to 45 (DSAL), 166 to 170 (QRIQR), and 251 to 256 (RCVGYR).

The protein belongs to the IPP transferase family. In terms of assembly, monomer. It depends on Mg(2+) as a cofactor.

The catalysed reaction is adenosine(37) in tRNA + dimethylallyl diphosphate = N(6)-dimethylallyladenosine(37) in tRNA + diphosphate. Its function is as follows. Catalyzes the transfer of a dimethylallyl group onto the adenine at position 37 in tRNAs that read codons beginning with uridine, leading to the formation of N6-(dimethylallyl)adenosine (i(6)A). The protein is tRNA dimethylallyltransferase of Burkholderia thailandensis (strain ATCC 700388 / DSM 13276 / CCUG 48851 / CIP 106301 / E264).